The following is a 407-amino-acid chain: Aspartate aminotransferase, cytoplasmic (407 aa).

3 residues coordinate L-aspartate: Gly39, Trp136, and Asn189. The residue at position 253 (Lys253) is an N6-(pyridoxal phosphate)lysine. Residue Arg381 coordinates L-aspartate.

This sequence belongs to the class-I pyridoxal-phosphate-dependent aminotransferase family. Homodimer. Requires pyridoxal 5'-phosphate as cofactor.

The protein resides in the cytoplasm. The enzyme catalyses L-aspartate + 2-oxoglutarate = oxaloacetate + L-glutamate. In terms of biological role, important for the metabolism of amino acids and Krebs-cycle related organic acids. In plants, it is involved in nitrogen metabolism and in aspects of carbon and energy metabolism. The sequence is that of Aspartate aminotransferase, cytoplasmic from Oryza sativa subsp. japonica (Rice).